The chain runs to 151 residues: MAQKEIVSNRKALRNYEVIETLEAGIVLTGTEIKSLRDHGGNLGDAYVIVSKGEGWLLNASIAPYRFGNIYNHEERRKRKLLLHRYELRKLEGKIAQKGMTLIPLGMFLSRGYVKVRLGCCRGKKAYDKRRTIIEREKEREVAAAMKRRHH.

This sequence belongs to the SmpB family.

It localises to the cytoplasm. Required for rescue of stalled ribosomes mediated by trans-translation. Binds to transfer-messenger RNA (tmRNA), required for stable association of tmRNA with ribosomes. tmRNA and SmpB together mimic tRNA shape, replacing the anticodon stem-loop with SmpB. tmRNA is encoded by the ssrA gene; the 2 termini fold to resemble tRNA(Ala) and it encodes a 'tag peptide', a short internal open reading frame. During trans-translation Ala-aminoacylated tmRNA acts like a tRNA, entering the A-site of stalled ribosomes, displacing the stalled mRNA. The ribosome then switches to translate the ORF on the tmRNA; the nascent peptide is terminated with the 'tag peptide' encoded by the tmRNA and targeted for degradation. The ribosome is freed to recommence translation, which seems to be the essential function of trans-translation. In Chlamydia pneumoniae (Chlamydophila pneumoniae), this protein is SsrA-binding protein.